Here is a 392-residue protein sequence, read N- to C-terminus: Formate-dependent phosphoribosylglycinamide formyltransferase (392 aa).

N(1)-(5-phospho-beta-D-ribosyl)glycinamide contacts are provided by residues 20–21 (EL) and E80. Residues R112, K153, 158–163 (SSGKGQ), 193–196 (EGFV), and E201 each bind ATP. Residues 117–306 (RLAAETLGLP…EFALHVRAIL (190 aa)) enclose the ATP-grasp domain. Residues E265 and E277 each coordinate Mg(2+). N(1)-(5-phospho-beta-D-ribosyl)glycinamide-binding positions include D284, K355, and 362–363 (RR).

This sequence belongs to the PurK/PurT family. Homodimer.

The enzyme catalyses N(1)-(5-phospho-beta-D-ribosyl)glycinamide + formate + ATP = N(2)-formyl-N(1)-(5-phospho-beta-D-ribosyl)glycinamide + ADP + phosphate + H(+). It participates in purine metabolism; IMP biosynthesis via de novo pathway; N(2)-formyl-N(1)-(5-phospho-D-ribosyl)glycinamide from N(1)-(5-phospho-D-ribosyl)glycinamide (formate route): step 1/1. In terms of biological role, involved in the de novo purine biosynthesis. Catalyzes the transfer of formate to 5-phospho-ribosyl-glycinamide (GAR), producing 5-phospho-ribosyl-N-formylglycinamide (FGAR). Formate is provided by PurU via hydrolysis of 10-formyl-tetrahydrofolate. This chain is Formate-dependent phosphoribosylglycinamide formyltransferase, found in Aeromonas hydrophila subsp. hydrophila (strain ATCC 7966 / DSM 30187 / BCRC 13018 / CCUG 14551 / JCM 1027 / KCTC 2358 / NCIMB 9240 / NCTC 8049).